Here is a 310-residue protein sequence, read N- to C-terminus: MLDKRIVDVRLDQLEILKAKNGKEHFEKQYTMGNLLGSGGFGSVYSGHRISDGQKVAIKQISRDRIQQWSKMPGEVNPVPNEIALLQSLGGGSGSVPGHRGIIRMLDWFEIPGQEYLIVFEKPQHCQDLFDFITERGALDESLARRFLKQVIEAVQFCHSKGIVHRDIKDENILVDTRTGDIKVIDFGSGATLKDSMYTDFEGTRVYSPPEWILYHKYHALPLTVWSLGVLLYDMVCGDIPFEQDTDIVKAKPSFNKRISNDCRSLICSCLSYNPGDRPSLEQILQHPWMMESSVDNGDLQEESKIKPSL.

Positions Tyr30–Met290 constitute a Protein kinase domain. ATP is bound by residues Leu36–Val44 and Lys59. Asp167 functions as the Proton acceptor in the catalytic mechanism.

Belongs to the protein kinase superfamily. CAMK Ser/Thr protein kinase family. PIM subfamily. In terms of processing, autophosphorylated.

The catalysed reaction is L-seryl-[protein] + ATP = O-phospho-L-seryl-[protein] + ADP + H(+). The enzyme catalyses L-threonyl-[protein] + ATP = O-phospho-L-threonyl-[protein] + ADP + H(+). Functionally, proto-oncogene with serine/threonine kinase activity involved in cell survival and cell proliferation. In Danio rerio (Zebrafish), this protein is Serine/threonine-protein kinase pim-2 (pim2).